The following is a 156-amino-acid chain: ATP synthase subunit b (156 aa).

The helical transmembrane segment at 7–27 threads the bilayer; the sequence is LIGQTVAFIIFVWFCMKFVWP.

Belongs to the ATPase B chain family. As to quaternary structure, F-type ATPases have 2 components, F(1) - the catalytic core - and F(0) - the membrane proton channel. F(1) has five subunits: alpha(3), beta(3), gamma(1), delta(1), epsilon(1). F(0) has three main subunits: a(1), b(2) and c(10-14). The alpha and beta chains form an alternating ring which encloses part of the gamma chain. F(1) is attached to F(0) by a central stalk formed by the gamma and epsilon chains, while a peripheral stalk is formed by the delta and b chains.

It localises to the cell inner membrane. Its function is as follows. F(1)F(0) ATP synthase produces ATP from ADP in the presence of a proton or sodium gradient. F-type ATPases consist of two structural domains, F(1) containing the extramembraneous catalytic core and F(0) containing the membrane proton channel, linked together by a central stalk and a peripheral stalk. During catalysis, ATP synthesis in the catalytic domain of F(1) is coupled via a rotary mechanism of the central stalk subunits to proton translocation. Component of the F(0) channel, it forms part of the peripheral stalk, linking F(1) to F(0). The polypeptide is ATP synthase subunit b (Shewanella baltica (strain OS155 / ATCC BAA-1091)).